The chain runs to 333 residues: Glyceraldehyde-3-phosphate dehydrogenase (333 aa).

Residues 11-12 (RI), Asp35, Met79, and Ser121 each bind NAD(+). D-glyceraldehyde 3-phosphate is bound by residues 150–152 (SCT), Thr181, 210–211 (TG), and Arg233. Cys151 serves as the catalytic Nucleophile. Asn315 contributes to the NAD(+) binding site.

The protein belongs to the glyceraldehyde-3-phosphate dehydrogenase family. As to quaternary structure, homotetramer.

The protein localises to the cytoplasm. The enzyme catalyses D-glyceraldehyde 3-phosphate + phosphate + NAD(+) = (2R)-3-phospho-glyceroyl phosphate + NADH + H(+). The protein operates within carbohydrate degradation; glycolysis; pyruvate from D-glyceraldehyde 3-phosphate: step 1/5. Catalyzes the oxidative phosphorylation of glyceraldehyde 3-phosphate (G3P) to 1,3-bisphosphoglycerate (BPG) using the cofactor NAD. The first reaction step involves the formation of a hemiacetal intermediate between G3P and a cysteine residue, and this hemiacetal intermediate is then oxidized to a thioester, with concomitant reduction of NAD to NADH. The reduced NADH is then exchanged with the second NAD, and the thioester is attacked by a nucleophilic inorganic phosphate to produce BPG. This chain is Glyceraldehyde-3-phosphate dehydrogenase (gap), found in Bacteroides fragilis (strain YCH46).